Here is a 624-residue protein sequence, read N- to C-terminus: uncharacterized protein (624 aa).

The interval 108 to 138 (PTAWSGMESDSTASERSLPQRTDTTSVSSQY) is disordered. Position 112 is a phosphoserine (Ser112). The span at 115–138 (ESDSTASERSLPQRTDTTSVSSQY) shows a compositional bias: polar residues. Ser205 bears the Phosphoserine mark. 2 disordered regions span residues 217–236 (LMESSGEKERNGNQELPGTR) and 305–329 (KRECIKLASSPSRMETESSEEPVSE).

This is an uncharacterized protein from Rattus norvegicus (Rat).